Here is a 210-residue protein sequence, read N- to C-terminus: Urease accessory protein UreG (210 aa).

Residue 14 to 21 (GPVGSGKT) participates in GTP binding.

This sequence belongs to the SIMIBI class G3E GTPase family. UreG subfamily. Homodimer. UreD, UreF and UreG form a complex that acts as a GTP-hydrolysis-dependent molecular chaperone, activating the urease apoprotein by helping to assemble the nickel containing metallocenter of UreC. The UreE protein probably delivers the nickel.

It is found in the cytoplasm. Facilitates the functional incorporation of the urease nickel metallocenter. This process requires GTP hydrolysis, probably effectuated by UreG. The sequence is that of Urease accessory protein UreG from Rhodopseudomonas palustris (strain BisB5).